A 272-amino-acid chain; its full sequence is Phosphonates import ATP-binding protein PhnC 1 (272 aa).

In terms of domain architecture, ABC transporter spans 2 to 246; sequence LRIQALTKTY…VLTSIYGEED (245 aa). Position 35 to 42 (35 to 42) interacts with ATP; sequence GPSGAGKS.

This sequence belongs to the ABC transporter superfamily. Phosphonates importer (TC 3.A.1.9.1) family. The complex is composed of two ATP-binding proteins (PhnC), two transmembrane proteins (PhnE) and a solute-binding protein (PhnD).

The protein resides in the cell inner membrane. It catalyses the reaction phosphonate(out) + ATP + H2O = phosphonate(in) + ADP + phosphate + H(+). In terms of biological role, part of the ABC transporter complex PhnCDE involved in phosphonates import. Responsible for energy coupling to the transport system. This is Phosphonates import ATP-binding protein PhnC 1 from Rhodopseudomonas palustris (strain BisB18).